The primary structure comprises 624 residues: Basal cell adhesion molecule (624 aa).

The first 25 residues, 1 to 25 (MEPPDARAGLLWLTLLLSGYSGAQA), serve as a signal peptide directing secretion. Ig-like V-type domains follow at residues 26–136 (ELHV…SSVR) and 141–251 (PEAT…HTFR). At 26–543 (ELHVSVPPRV…GSVAPQTAQA (518 aa)) the chain is on the extracellular side. 3 disulfides stabilise this stretch: cysteine 47–cysteine 119, cysteine 166–cysteine 231, and cysteine 285–cysteine 331. 3 consecutive Ig-like C2-type domains span residues 268–343 (PSTT…EEVQ), 357–436 (PLEL…QSFQ), and 443–534 (PELK…FHFG). Asparagine 315, asparagine 371, and asparagine 378 each carry an N-linked (GlcNAc...) asparagine glycan. Disulfide bonds link cysteine 379/cysteine 419 and cysteine 468/cysteine 518. The segment at 477–497 (KLTWSQRGDTTPAEPPFEGRG) is disordered. Residues 544–564 (GVAVMAVAVSVGLLLLVVAAF) traverse the membrane as a helical segment. Residues 565-624 (YCMRRKGRPGCCQRAEKGAPPAREPELSHSGSERPEHTGLLMGGPSGGGRGGNGGFGDEC) lie on the Cytoplasmic side of the membrane. The segment at 574 to 624 (GCCQRAEKGAPPAREPELSHSGSERPEHTGLLMGGPSGGGRGGNGGFGDEC) is disordered. Residues 587-601 (REPELSHSGSERPEH) show a composition bias toward basic and acidic residues. Serine 592, serine 594, and serine 596 each carry phosphoserine. A compositionally biased stretch (gly residues) spans 605–624 (LMGGPSGGGRGGNGGFGDEC).

In terms of assembly, homodimer. Interacts with ITGA4:ITGB1. Interacts with spectrins SPTA1 and SPTB1.

It is found in the cell membrane. Functionally, transmembrane glycoprotein that functions as both a receptor and an adhesion molecule playing a crucial role in cell adhesion, motility, migration and invasion. Extracellular domain enables binding to extracellular matrix proteins, such as laminin, integrin and other ligands while its intracellular domain interacts with cytoskeletal proteins like hemoglobin, facilitating cell signal transduction. Serves as a receptor for laminin alpha-5/LAMA5 to promote cell adhesion. Mechanistically, JAK2 induces BCAM phosphorylation and activates its adhesion to laminin by stimulating a Rap1/AKT signaling pathway in the absence of EPOR. The protein is Basal cell adhesion molecule (Bcam) of Rattus norvegicus (Rat).